The following is a 500-amino-acid chain: MQDQYILALDQGTTSSRAMLFDRQGNIVSIAQKEFEQIYPQPGWVEHDPQEIWSTQAGVAAEAVTRTGLNGTSIAAIGITNQRETTIVWDRETGQPVYNAIVWQDRRTADFCDSLKKQGLEAKVRAKTGLPIDSYFSATKIRWILDNVPGARDKARQGKLAFGTVDSWLVWNFTKHELHVTDVTNASRTMLFNIHTREWDSELLELLDIPRSMLPDVKASSEIYGHTKTTVFASKIPLAGIAGDQHAALFGQMCTTSGMVKNTYGTGCFLMMNTGDKPIESKNNLVTTIAWQIGDDVQYALEGSIFIAGAVVQWLRDGVGIIKTAAEIEALAASVPHTDGVYLVPAFAGLGAPHWNARARGSVFGVTRGTTAAHLARAALDSIAYQSLDVLAAMEADSGISIGELRVDGGASANDLLMQFQADLLGVDAVRPQITETTALGAAYLAGLAIGYWKNLDEVRSQWQLDRRFSPSMPKEQVEQRMAGWQRAVRAAKAWADDTQ.

Residue T13 participates in ADP binding. Residues T13, T14, and S15 each coordinate ATP. T13 contributes to the sn-glycerol 3-phosphate binding site. An ADP-binding site is contributed by R17. Positions 83, 84, 135, and 244 each coordinate sn-glycerol 3-phosphate. Positions 83, 84, 135, 244, and 245 each coordinate glycerol. The ADP site is built by T266 and G309. 4 residues coordinate ATP: T266, G309, Q313, and G410. The ADP site is built by G410 and N414.

This sequence belongs to the FGGY kinase family.

The catalysed reaction is glycerol + ATP = sn-glycerol 3-phosphate + ADP + H(+). The protein operates within polyol metabolism; glycerol degradation via glycerol kinase pathway; sn-glycerol 3-phosphate from glycerol: step 1/1. Its activity is regulated as follows. Inhibited by fructose 1,6-bisphosphate (FBP). Its function is as follows. Key enzyme in the regulation of glycerol uptake and metabolism. Catalyzes the phosphorylation of glycerol to yield sn-glycerol 3-phosphate. This is Glycerol kinase from Burkholderia ambifaria (strain MC40-6).